The primary structure comprises 706 residues: Polyribonucleotide nucleotidyltransferase (706 aa).

D486 and D492 together coordinate Mg(2+). Positions 553-612 (PRIHTIKISTDKIKDVIGKGGSVIRALTEETGTTIEIEDDGTVKIASTDGEKAKHAIRRI) constitute a KH domain. The 69-residue stretch at 622 to 690 (GRVYQGKVTR…RQGRVRLSIK (69 aa)) folds into the S1 motif domain.

It belongs to the polyribonucleotide nucleotidyltransferase family. As to quaternary structure, component of the RNA degradosome, which is a multiprotein complex involved in RNA processing and mRNA degradation. Mg(2+) serves as cofactor.

The protein localises to the cytoplasm. The catalysed reaction is RNA(n+1) + phosphate = RNA(n) + a ribonucleoside 5'-diphosphate. Involved in mRNA degradation. Catalyzes the phosphorolysis of single-stranded polyribonucleotides processively in the 3'- to 5'-direction. The protein is Polyribonucleotide nucleotidyltransferase of Pectobacterium carotovorum subsp. carotovorum (strain PC1).